We begin with the raw amino-acid sequence, 77 residues long: Conotoxin Vc6b (77 aa).

Residues 1-22 (MKLTCMMIVAVLFLTANTFVTA) form the signal peptide. A propeptide spanning residues 23-47 (DDSGNGMENLFPKAGHEMENLEASN) is cleaved from the precursor. 3 disulfides stabilise this stretch: C52–C66, C59–C72, and C67–C76.

In terms of tissue distribution, expressed by the venom duct.

It localises to the secreted. This is Conotoxin Vc6b from Conus victoriae (Queen Victoria cone).